Here is a 348-residue protein sequence, read N- to C-terminus: uncharacterized protein (348 aa).

This is an uncharacterized protein from Caenorhabditis elegans.